We begin with the raw amino-acid sequence, 93 residues long: Protein FptB (93 aa).

Residues 1-25 (MPRQSGFGWAWRVPLALAGSLAAAT) form the signal peptide. 2 helical membrane-spanning segments follow: residues 44–64 (LYAGLFGALGVGLLLLVGGLL) and 71–91 (FAWRLGGSLLVLGLALWLLAG).

The protein localises to the cell membrane. Functionally, may play some role in transport of Fe(3+)-pyochelin. The protein is Protein FptB (fptB) of Pseudomonas aeruginosa (strain ATCC 15692 / DSM 22644 / CIP 104116 / JCM 14847 / LMG 12228 / 1C / PRS 101 / PAO1).